The primary structure comprises 1653 residues: Ciliary rootlet coiled-coil protein 2 (1653 aa).

Over residues 1 to 17 (MSSASSEPGNGDASQQP) the composition is skewed to polar residues. A disordered region spans residues 1–57 (MSSASSEPGNGDASQQPLLGLDTVIQRLEDTILSPTASREDRALTVRGEGRQASPTP). Residues 38 to 50 (SREDRALTVRGEG) show a composition bias toward basic and acidic residues. Coiled-coil stretches lie at residues 86–145 (VARV…SELE) and 310–351 (KVAL…LVAQ). Residues 367–396 (LGEPRRPLRSPQRATSPHQGASPPHICSPA) form a disordered region. The stretch at 423 to 1215 (LKSSQALVAS…QRKLAEVEAA (793 aa)) forms a coiled coil. Residues 1302–1356 (GLQRQSPWASPEQPGSPTKGSDSSQALPGQQGTSPPARPHSPLRWPSPTPGGRSS) form a disordered region. Positions 1304-1335 (QRQSPWASPEQPGSPTKGSDSSQALPGQQGTS) are enriched in polar residues. The stretch at 1361–1570 (VATVQDILRD…QAQMTEMEQA (210 aa)) forms a coiled coil.

It belongs to the rootletin family.

The chain is Ciliary rootlet coiled-coil protein 2 from Homo sapiens (Human).